We begin with the raw amino-acid sequence, 510 residues long: ATP synthase subunit alpha (510 aa).

Position 170–177 (170–177 (GDRQTGKT)) interacts with ATP.

Belongs to the ATPase alpha/beta chains family. As to quaternary structure, F-type ATPases have 2 components, CF(1) - the catalytic core - and CF(0) - the membrane proton channel. CF(1) has five subunits: alpha(3), beta(3), gamma(1), delta(1), epsilon(1). CF(0) has three main subunits: a(1), b(2) and c(9-12). The alpha and beta chains form an alternating ring which encloses part of the gamma chain. CF(1) is attached to CF(0) by a central stalk formed by the gamma and epsilon chains, while a peripheral stalk is formed by the delta and b chains.

The protein resides in the cell inner membrane. It catalyses the reaction ATP + H2O + 4 H(+)(in) = ADP + phosphate + 5 H(+)(out). In terms of biological role, produces ATP from ADP in the presence of a proton gradient across the membrane. The alpha chain is a regulatory subunit. This Acidiphilium cryptum (strain JF-5) protein is ATP synthase subunit alpha.